Consider the following 422-residue polypeptide: 3-phosphoshikimate 1-carboxyvinyltransferase (422 aa).

Residues lysine 20, serine 21, and arginine 25 each contribute to the 3-phosphoshikimate site. Position 20 (lysine 20) interacts with phosphoenolpyruvate. Residues glycine 90 and arginine 118 each coordinate phosphoenolpyruvate. The 3-phosphoshikimate site is built by serine 161, serine 162, glutamine 163, serine 189, aspartate 305, and lysine 332. Glutamine 163 serves as a coordination point for phosphoenolpyruvate. Aspartate 305 functions as the Proton acceptor in the catalytic mechanism. Residues arginine 336 and arginine 378 each contribute to the phosphoenolpyruvate site.

It belongs to the EPSP synthase family. Monomer.

Its subcellular location is the cytoplasm. It carries out the reaction 3-phosphoshikimate + phosphoenolpyruvate = 5-O-(1-carboxyvinyl)-3-phosphoshikimate + phosphate. Its pathway is metabolic intermediate biosynthesis; chorismate biosynthesis. In terms of biological role, catalyzes the transfer of the enolpyruvyl moiety of phosphoenolpyruvate (PEP) to the 5-hydroxyl of shikimate-3-phosphate (S3P) to produce enolpyruvyl shikimate-3-phosphate and inorganic phosphate. The polypeptide is 3-phosphoshikimate 1-carboxyvinyltransferase (Nitrosopumilus maritimus (strain SCM1)).